We begin with the raw amino-acid sequence, 114 residues long: MSDPKPTRSQGDLAEMLEMLLDKGVVVNADIAVSVGDTELLGIELRAAIASFETAAEYGLEFPTGTDMERVESAANISPDQSDPASETQSETESTNPLSDDSTPTASTSAEETK.

An alpha helix 1 region spans residues 13 to 22 (LAEMLEMLLD). Beta-strand regions lie at residues 25 to 35 (VVVNADIAVSV) and 40 to 50 (LLGIELRAAIA). The Conserved in GvpM1/2 but not GvpA motif lies at 46–50 (RAAIA). Alpha helix stretches follow at residues 52-72 (FETAAEYGLEFPTGTDMERVE), 78-87 (SPDQSDPASE), and 95-105 (TNPLSDDSTPT). The segment at 63 to 114 (PTGTDMERVESAANISPDQSDPASETQSETESTNPLSDDSTPTASTSAEETK) is disordered. The segment covering 75-98 (ANISPDQSDPASETQSETESTNPL) has biased composition (polar residues). The segment covering 99 to 114 (SDDSTPTASTSAEETK) has biased composition (low complexity).

Belongs to the gas vesicle GvpA family. As to quaternary structure, gvpF to GvpM interact with each other in vitro, and may form multi-subunit complex(es). Interacts with GvpA1.

Its subcellular location is the gas vesicle. In terms of biological role, proteins GvpF to GvpM might be involved in nucleating gas vesicle formation. Mutagenesis of residues 13-61 shows that almost none of them can be substituted and still make gas vesicles. A minor component of the gas vesicle. Gas vesicles are hollow, gas filled proteinaceous nanostructures found in several microbial planktonic microorganisms. They allow positioning of halobacteria at the optimal depth for growth in the poorly aerated, shallow brine pools of their habitat. Expression of a 9.5 kb p-vac DNA fragment containing 2 divergently transcribed regions (gvpD-gvpE-gvpF-gvpG-gvpH-gvpI-gvpJ-gvpK-gvpL-gvpM and gvpA-gvpC-gvpN-gvpO) allows H.volcanii to produce gas vesicles. All site-directed mutagenesis is tested in H.volcanii. A minimal gas vesicle can be made in H.volcanii by gvpA1-gvpO1 plus gvpF1-gvpG1-gvpJ1-gvpK1-gvpL1-gvpM1; lack of enough GvpJ1 prevents formation. A similar region restores gas vesicle production in H.halobium without the p-vac locus, but it still has the c-vac locus. The protein is Gas vesicle protein J1 (gvpJ11) of Halobacterium salinarum (strain ATCC 700922 / JCM 11081 / NRC-1) (Halobacterium halobium).